The following is a 33-amino-acid chain: Protamine-M6/M7 (33 aa).

Residues 1–33 (PRRRRETSRPIRRRRRARRAPIRRRRRVVRRRR) form a disordered region.

As to expression, testis.

Its subcellular location is the nucleus. The protein localises to the chromosome. In terms of biological role, protamines substitute for histones in the chromatin of sperm during the haploid phase of spermatogenesis. They compact sperm DNA into a highly condensed, stable and inactive complex. In Mugil cephalus (Flathead mullet), this protein is Protamine-M6/M7.